Consider the following 341-residue polypeptide: Tetraacyldisaccharide 4'-kinase (341 aa).

Residue 65–72 (TVGGSGKT) coordinates ATP.

Belongs to the LpxK family.

The enzyme catalyses a lipid A disaccharide + ATP = a lipid IVA + ADP + H(+). It functions in the pathway glycolipid biosynthesis; lipid IV(A) biosynthesis; lipid IV(A) from (3R)-3-hydroxytetradecanoyl-[acyl-carrier-protein] and UDP-N-acetyl-alpha-D-glucosamine: step 6/6. Transfers the gamma-phosphate of ATP to the 4'-position of a tetraacyldisaccharide 1-phosphate intermediate (termed DS-1-P) to form tetraacyldisaccharide 1,4'-bis-phosphate (lipid IVA). This is Tetraacyldisaccharide 4'-kinase from Shewanella woodyi (strain ATCC 51908 / MS32).